Reading from the N-terminus, the 431-residue chain is Tol-Pal system protein TolB (431 aa).

The signal sequence occupies residues 1–26 (MSLMTKLGFRALVASCLITAGSAANA). The disordered stretch occupies residues 406-431 (DGSAPPQILSVQGGSVREPSWGPFMQ).

It belongs to the TolB family. In terms of assembly, the Tol-Pal system is composed of five core proteins: the inner membrane proteins TolA, TolQ and TolR, the periplasmic protein TolB and the outer membrane protein Pal. They form a network linking the inner and outer membranes and the peptidoglycan layer.

The protein localises to the periplasm. Its function is as follows. Part of the Tol-Pal system, which plays a role in outer membrane invagination during cell division and is important for maintaining outer membrane integrity. The protein is Tol-Pal system protein TolB of Burkholderia cenocepacia (strain HI2424).